A 295-amino-acid chain; its full sequence is Non-selective voltage-gated ion channel VDAC2 (295 aa).

ATP-binding residues include Lys-24 and Lys-32. Position 32 is an N6-acetyllysine; alternate (Lys-32). Lys-32 carries the post-translational modification N6-succinyllysine; alternate. A Glycyl lysine isopeptide (Lys-Gly) (interchain with G-Cter in ubiquitin); alternate cross-link involves residue Lys-32. 2 beta stranded membrane-spanning segments follow: residues 38–47 (LVKLDVKTKS) and 51–59 (VEFSTSGSS). Lys-65 participates in a covalent cross-link: Glycyl lysine isopeptide (Lys-Gly) (interchain with G-Cter in ubiquitin). The chain crosses the membrane as a beta stranded span at residues 66–76 (VSGTLETKYKW). Tyr-79 bears the Phosphotyrosine mark. The next 3 membrane-spanning stretches (beta stranded) occupy residues 81–88 (LTFTEKWN), 92–101 (TLGTEIAIED), and 107–116 (LKLTFDTTFS). Residue Thr-119 is modified to Phosphothreonine. Lys-121 is subject to N6-acetyllysine; alternate. Residue Lys-121 forms a Glycyl lysine isopeptide (Lys-Gly) (interchain with G-Cter in ubiquitin); alternate linkage. A Glycyl lysine isopeptide (Lys-Gly) (interchain with G-Cter in ubiquitin) cross-link involves residue Lys-122. The next 4 membrane-spanning stretches (beta stranded) occupy residues 123–132 (SGKIKSAYKR), 135–142 (INLGCDVD), 149–157 (AIHGSAVFG), and 162–170 (LAGYQMTFD). Lys-173 is covalently cross-linked (Glycyl lysine isopeptide (Lys-Gly) (interchain with G-Cter in ubiquitin)). The next 6 beta stranded transmembrane spans lie at 175–187 (KLTRSNFAVGYRT), 190–197 (FQLHTNVN), 201–210 (EFGGSIYQKV), 214–223 (FDTSVNLAWT), 230–239 (RFGIAAKYQL), and 243–250 (ASISAKVN). Tyr-237 is subject to Phosphotyrosine. Ser-252 carries the phosphoserine modification. Residues 254 to 256 (LIG) and 272 to 276 (SALVD) contribute to the NAD(+) site. 2 beta stranded membrane passes run 254 to 263 (LIGVGYTQTL) and 266 to 275 (GVKLTLSALV). An N6-acetyllysine; alternate modification is found at Lys-278. A Glycyl lysine isopeptide (Lys-Gly) (interchain with G-Cter in ubiquitin); alternate cross-link involves residue Lys-278. A beta stranded membrane pass occupies residues 285–294 (HKLGLALELE).

This sequence belongs to the eukaryotic mitochondrial porin family. Monomer, homodimer and higher order oligomers; formation of higher order structures is necessary for scramblase activity. Interacts with ARMC12 in a TBC1D21-dependent manner. Interacts with KLC3. Interacts with SPATA33. Interacts with PPP3CC in a SPATA33-dependent manner. In terms of processing, ubiquitinated by PRKN during mitophagy, leading to its degradation and enhancement of mitophagy. Deubiquitinated by USP30. Highly expressed in heart, kidney, brain and ascitic tumor with very low levels in liver. Expressed in the head region of epididymal sperm.

The protein localises to the mitochondrion outer membrane. It is found in the membrane. The catalysed reaction is chloride(in) = chloride(out). The enzyme catalyses K(+)(in) = K(+)(out). It carries out the reaction a 1,2-diacyl-sn-glycero-3-phospho-L-serine(in) = a 1,2-diacyl-sn-glycero-3-phospho-L-serine(out). It catalyses the reaction a 1,2-diacyl-sn-glycero-3-phosphocholine(in) = a 1,2-diacyl-sn-glycero-3-phosphocholine(out). The catalysed reaction is a 1,2-diacyl-sn-glycero-3-phospho-(1D-myo-inositol)(in) = a 1,2-diacyl-sn-glycero-3-phospho-(1D-myo-inositol)(out). In terms of biological role, non-selective voltage-gated ion channel that mediates the transport of anions and cations through the mitochondrion outer membrane and plasma membrane. The channel adopts an open conformation at zero mV and a closed conformation at both positive and negative potentials. There are two populations of channels; the main that functions in a lower open-state conductance with lower ion selectivity, that switch, in a voltage-dependent manner, from the open to a low-conducting 'closed' state and the other that has a normal ion selectivity in the typical high conductance, 'open' state. Binds various lipids, including the sphingolipid ceramide, the phospholipid phosphatidylcholine, and the sterols cholesterol and oxysterol. Binding of ceramide promotes the mitochondrial outer membrane permeabilization (MOMP) apoptotic pathway. Catalyzes the scrambling of phospholipids across the outer mitochondrial membrane; the mechanism is unrelated to channel activity and is capable of translocating both anionic and zwitterionic phospholipids. The chain is Non-selective voltage-gated ion channel VDAC2 from Rattus norvegicus (Rat).